A 188-amino-acid chain; its full sequence is 3-deoxy-D-manno-octulosonate 8-phosphate phosphatase KdsC (188 aa).

Positions 32 and 34 each coordinate Mg(2+). Residues D34, 55 to 59 (NVRDG), R63, R78, R86, and K102 contribute to the substrate site. D125 is a binding site for Mg(2+).

Homotetramer. Mg(2+) is required as a cofactor. It depends on Co(2+) as a cofactor.

The catalysed reaction is 3-deoxy-alpha-D-manno-2-octulosonate-8-phosphate + H2O = 3-deoxy-alpha-D-manno-oct-2-ulosonate + phosphate. The protein operates within carbohydrate biosynthesis; 3-deoxy-D-manno-octulosonate biosynthesis; 3-deoxy-D-manno-octulosonate from D-ribulose 5-phosphate: step 3/3. Its pathway is bacterial outer membrane biogenesis; lipopolysaccharide biosynthesis. Inhibited by calcium, cadmium, mercury, and copper ions. In terms of biological role, catalyzes the hydrolysis of 3-deoxy-D-manno-octulosonate 8-phosphate (KDO 8-P) to 3-deoxy-D-manno-octulosonate (KDO) and inorganic phosphate. This Escherichia coli (strain B / BL21-DE3) protein is 3-deoxy-D-manno-octulosonate 8-phosphate phosphatase KdsC.